The chain runs to 174 residues: Cytochrome c-type biogenesis protein CcmE (174 aa).

Residues 1-8 (MNPRRKSR) lie on the Cytoplasmic side of the membrane. A helical; Signal-anchor for type II membrane protein transmembrane segment spans residues 9-29 (LSVVLFILLGISVASALVLYA). At 30–174 (LRQNIDLFYT…QEKQFKEGNQ (145 aa)) the chain is on the periplasmic side. Heme-binding residues include histidine 131 and tyrosine 135. Residues 149 to 174 (KPMGISDLKNESDRDRQEKQFKEGNQ) form a disordered region. Positions 156 to 174 (LKNESDRDRQEKQFKEGNQ) are enriched in basic and acidic residues.

This sequence belongs to the CcmE/CycJ family.

Its subcellular location is the cell inner membrane. Functionally, heme chaperone required for the biogenesis of c-type cytochromes. Transiently binds heme delivered by CcmC and transfers the heme to apo-cytochromes in a process facilitated by CcmF and CcmH. This Histophilus somni (strain 2336) (Haemophilus somnus) protein is Cytochrome c-type biogenesis protein CcmE.